The sequence spans 926 residues: MLSKIIGSVVGTKNERELKRMRKVVSKINAYEAAIQALSDEQLQQKTEEFKARHQGGESLDALLPEAFAICREASLRVNGMRHYDVQLIGGITLHEGKIAEMKTGEGKTLMGTLAMYLNAISGKGVHLVTVNDYLAARDAELNRPLFGFLGMTVGVIYSQQPPQEKVDAYQADITYGTNNEYGFDYLRDNMVFSLKEKKQRPLNFCIIDEIDSILIDEARTPLIISGQAEDSSRMYALINTIIPVLIRSKDEEANKNNEEEDFWIDEKNRQIEISEKGYEKIERFLIQVGELGENESLYSPSRLPLLAHVQAAIRAHHVFVKNIHYIVDDGEVVIVDENTGRTMPGRRWSEGLHQAVEAKENVEIQAENQTLATTTFQNFFRLYDKLSGMTGTADTEAAEFKSTYDLDVIVIPTHEPIARVDMDDQIFLTKLGKYKGIIREIQEIQAKGAPVLVGTATIEASEELSYLLDQEGVKHNVLNAKQHEREAEIIAQAGSPKSVTIATNMAGRGTDIILGGNWQSFIEDIDAVSPEEMARLKAQWQIKHDQVVAAGGLHIIGSERHESRRIDNQLRGRAGRQGDPGMSRFFLSLEDDLMRIFAGDRVVNMMRAMGLKEDEAIEHKMVSKSIENAQGKVESRDFDARKNLLKYDDVANDQRKVIYGQRDDLLAEMDLLEAIKIMHQEVYNAMINQFIPPGSIDDQWNVDGLEDELENEFKIAMPINDWLDEDRRLDEEGLRAKIIETALDRYHSRREQMGEKDAAQLERHFMLQSLDKHWKEHLTQMDQLRKGIHLRGYAQKNPEQEYKRESFELFQMMLGAIKSETVQDLSRVHIPTKEELEALEIQQRENAAHMQMQFEHSDIDNMDGGVERAAVQSRNVVGGATGASVAGAMAGSSDDADPYAGMNISRNAPCPCGSALKYKQCHGKI.

ATP-binding positions include glutamine 87, 105 to 109 (GEGKT), and aspartate 512. Zn(2+)-binding residues include cysteine 911, cysteine 913, cysteine 922, and histidine 923.

This sequence belongs to the SecA family. As to quaternary structure, monomer and homodimer. Part of the essential Sec protein translocation apparatus which comprises SecA, SecYEG and auxiliary proteins SecDF-YajC and YidC. The cofactor is Zn(2+).

The protein resides in the cell inner membrane. Its subcellular location is the cytoplasm. It carries out the reaction ATP + H2O + cellular proteinSide 1 = ADP + phosphate + cellular proteinSide 2.. Part of the Sec protein translocase complex. Interacts with the SecYEG preprotein conducting channel. Has a central role in coupling the hydrolysis of ATP to the transfer of proteins into and across the cell membrane, serving both as a receptor for the preprotein-SecB complex and as an ATP-driven molecular motor driving the stepwise translocation of polypeptide chains across the membrane. The protein is Protein translocase subunit SecA of Psychrobacter cryohalolentis (strain ATCC BAA-1226 / DSM 17306 / VKM B-2378 / K5).